A 228-amino-acid chain; its full sequence is uncharacterized protein (228 aa).

The signal sequence occupies residues 1-28 (MRKKRVITCVMAASLTLGSLLPAGYASA).

This is an uncharacterized protein from Bacillus subtilis (strain 168).